The sequence spans 936 residues: Sine oculis-binding protein homolog A (936 aa).

Basic and acidic residues predominate over residues 1–14 (MAEMEKEGRPPESK). Disordered stretches follow at residues 1-46 (MAEM…GQAG) and 108-151 (ASTL…HGGL). Over residues 108–144 (ASTLENSSGSPPHANSSGSTPTSRNGVTAESSVNPSS) the composition is skewed to polar residues. FCS-type zinc fingers lie at residues 169–207 (EDSS…KCFA) and 247–287 (LKTN…KCLN). Disordered stretches follow at residues 311-330 (LPTS…LTPE), 336-424 (LSEL…VMTP), 486-511 (SPHL…HPAA), 574-632 (NPQR…KQTE), 697-727 (PPPA…DTYS), and 842-877 (DSAG…EDHA). Over residues 349–382 (GATIAGPSGSTSGSPSEAGTVCSSSSSSSSSSSS) the composition is skewed to low complexity. A compositionally biased stretch (pro residues) spans 395 to 404 (SLPPPHPPPI). 3 stretches are compositionally biased toward polar residues: residues 617-632 (PPNS…KQTE), 708-717 (DGSTSISTGT), and 850-859 (NDQSAITTGT).

The protein belongs to the SOBP family.

Implicated in development of the cochlea. This chain is Sine oculis-binding protein homolog A (sobpa), found in Danio rerio (Zebrafish).